Here is a 132-residue protein sequence, read N- to C-terminus: Phosphoribosyl-AMP cyclohydrolase (132 aa).

Asp-85 is a binding site for Mg(2+). Residue Cys-86 participates in Zn(2+) binding. Asp-87 and Asp-89 together coordinate Mg(2+). 2 residues coordinate Zn(2+): Cys-102 and Cys-109.

This sequence belongs to the PRA-CH family. In terms of assembly, homodimer. Mg(2+) is required as a cofactor. It depends on Zn(2+) as a cofactor.

It localises to the cytoplasm. The catalysed reaction is 1-(5-phospho-beta-D-ribosyl)-5'-AMP + H2O = 1-(5-phospho-beta-D-ribosyl)-5-[(5-phospho-beta-D-ribosylamino)methylideneamino]imidazole-4-carboxamide. Its pathway is amino-acid biosynthesis; L-histidine biosynthesis; L-histidine from 5-phospho-alpha-D-ribose 1-diphosphate: step 3/9. In terms of biological role, catalyzes the hydrolysis of the adenine ring of phosphoribosyl-AMP. The polypeptide is Phosphoribosyl-AMP cyclohydrolase (Frankia alni (strain DSM 45986 / CECT 9034 / ACN14a)).